A 90-amino-acid polypeptide reads, in one-letter code: Putative membrane protein insertion efficiency factor (90 aa).

Belongs to the UPF0161 family.

The protein localises to the cell membrane. Functionally, could be involved in insertion of integral membrane proteins into the membrane. This is Putative membrane protein insertion efficiency factor from Oceanobacillus iheyensis (strain DSM 14371 / CIP 107618 / JCM 11309 / KCTC 3954 / HTE831).